Reading from the N-terminus, the 882-residue chain is DNA mismatch repair protein MutS (882 aa).

Residues Met1 to Tyr22 are disordered. An ATP-binding site is contributed by Gly662–Ser669.

This sequence belongs to the DNA mismatch repair MutS family.

This protein is involved in the repair of mismatches in DNA. It is possible that it carries out the mismatch recognition step. This protein has a weak ATPase activity. This chain is DNA mismatch repair protein MutS, found in Microcystis aeruginosa (strain NIES-843 / IAM M-2473).